We begin with the raw amino-acid sequence, 154 residues long: Myoglobin (154 aa).

The 147-residue stretch at 2–148 folds into the Globin domain; it reads GLSDGEWQLV…FRNDMAAQYK (147 aa). Position 4 is a phosphoserine (S4). H65 contributes to the nitrite binding site. H65 contributes to the O2 binding site. The residue at position 68 (T68) is a Phosphothreonine. H94 is a heme b binding site.

Belongs to the globin family. In terms of assembly, monomeric.

It is found in the cytoplasm. Its subcellular location is the sarcoplasm. The enzyme catalyses Fe(III)-heme b-[protein] + nitric oxide + H2O = Fe(II)-heme b-[protein] + nitrite + 2 H(+). It carries out the reaction H2O2 + AH2 = A + 2 H2O. In terms of biological role, monomeric heme protein which primary function is to store oxygen and facilitate its diffusion within muscle tissues. Reversibly binds oxygen through a pentacoordinated heme iron and enables its timely and efficient release as needed during periods of heightened demand. Depending on the oxidative conditions of tissues and cells, and in addition to its ability to bind oxygen, it also has a nitrite reductase activity whereby it regulates the production of bioactive nitric oxide. Under stress conditions, like hypoxia and anoxia, it also protects cells against reactive oxygen species thanks to its pseudoperoxidase activity. This chain is Myoglobin (MB), found in Bos mutus grunniens (Wild yak).